A 389-amino-acid chain; its full sequence is Protein OSCP1 (389 aa).

As to expression, expressed predominantly in testis, also found in placenta and to a lesser extent in thymus and small intestine; abundantly expressed in tumor-derived cell lines. Ubiquitously expressed.

The protein localises to the basal cell membrane. May be involved in drug clearance in the placenta. This Homo sapiens (Human) protein is Protein OSCP1 (OSCP1).